The following is a 220-amino-acid chain: Nucleolar protein 3 (220 aa).

Residue glycine 2 is the site of N-myristoyl glycine attachment. Residues 4–95 form the CARD domain; the sequence is VQERPSETID…MPDPAWDWQH (92 aa). The interval 20-70 is essential for interaction with BAX; sequence VETLQADSGLLLDALVARGVLTGPEYEALDALPDAERRVRRLLLLVQSKGE. The segment at 111 to 220 is disordered; sequence GHWTPEAPSS…FQEEDESEDS (110 aa). Threonine 149 is subject to Phosphothreonine; by CK2. Residues 152 to 220 are compositionally biased toward acidic residues; it reads EPELEAEATE…FQEEDESEDS (69 aa).

As to quaternary structure, oligomerizes (via CARD doamin). Interacts (via CARD domain) with CASP2; inhibits CASP2 activity in a phosphorylation-dependent manner. Interacts with CASP8; decreases CASP8 activity in a mitochondria localization- and phosphorylation-dependent manner and this interaction is dissociated by calcium. Interacts with TFPT; translocates NOL3 into the nucleus and negatively regulated TFPT-induced cell death. Interacts directly (via CARD domain) with FAS and FADD (via DED domain); inhibits death-inducing signaling complex (DISC) assembly by inhibiting the increase in FAS-FADD binding induced by FAS activation. Interacts (via CARD domain) with BAX (via a C-terminal 33 residues); inhibits BAX activation and translocation and consequently cytochrome c release from mitochondria. Interacts with PPM1G; may dephosphorylate NOL3. Interacts (via CARD domain) with BBC3 (via BH3 domain); preventing the association of BBC3 with BCL2 and resulting in activation of CASP8. Interacts (via CARD domain) with BAD(via BH3 domain); preventing the association of BAD with BCL2. Interacts directly (via CARD domain) with TNFRSF1A; inhibits TNF-signaling pathway. In terms of processing, phosphorylation at Thr-149 is required for its antiapoptotic effect by blocking death-inducing signaling complex death-inducing signaling complex (DISC) activity through the control of interaction with CASP8. Phosphorylation at Thr-149 results in translocation to mitochondria and this translocation enables the binding to CASP8. Dephosphorylated at Thr-149 by calcineurin; doesn't inhibit the association between FADD and CASP8 and the consequent apoptosis. Polyubiquitinated by MDM2; promoting proteasomal-dependent degradation in response to apoptotic stimuli.

It is found in the cytoplasm. It localises to the mitochondrion. The protein localises to the sarcoplasmic reticulum. The protein resides in the membrane. Apoptosis repressor that blocks multiple modes of cell death. Inhibits extrinsic apoptotic pathways through two different ways. Firstly by interacting with FAS and FADD upon FAS activation blocking death-inducing signaling complex (DISC) assembly. Secondly by interacting with CASP8 in a mitochondria localization- and phosphorylation-dependent manner, limiting the amount of soluble CASP8 available for DISC-mediated activation. Inhibits intrinsic apoptotic pathway in response to a wide range of stresses, through its interaction with BAX resulting in BAX inactivation, preventing mitochondrial dysfunction and release of pro-apoptotic factors. Inhibits calcium-mediated cell death by functioning as a cytosolic calcium buffer, dissociating its interaction with CASP8 and maintaining calcium homeostasis. Negatively regulates oxidative stress-induced apoptosis by phosphorylation-dependent suppression of the mitochondria-mediated intrinsic pathway, by blocking CASP2 activation and BAX translocation. Negatively regulates hypoxia-induced apoptosis in part by inhibiting the release of cytochrome c from mitochondria in a caspase-independent manner. Also inhibits TNF-induced necrosis by preventing TNF-signaling pathway through TNFRSF1A interaction abrogating the recruitment of RIPK1 to complex I. Finally through its role as apoptosis repressor, promotes vascular remodeling through inhibition of apoptosis and stimulation of proliferation, in response to hypoxia. Inhibits too myoblast differentiation through caspase inhibition. This chain is Nucleolar protein 3 (Nol3), found in Mus musculus (Mouse).